Consider the following 176-residue polypeptide: ATP-dependent protease subunit HslV (176 aa).

T2 is a catalytic residue. Positions 157, 160, and 163 each coordinate Na(+).

The protein belongs to the peptidase T1B family. HslV subfamily. As to quaternary structure, a double ring-shaped homohexamer of HslV is capped on each side by a ring-shaped HslU homohexamer. The assembly of the HslU/HslV complex is dependent on binding of ATP.

The protein localises to the cytoplasm. The catalysed reaction is ATP-dependent cleavage of peptide bonds with broad specificity.. With respect to regulation, allosterically activated by HslU binding. Functionally, protease subunit of a proteasome-like degradation complex believed to be a general protein degrading machinery. This Proteus mirabilis (strain HI4320) protein is ATP-dependent protease subunit HslV.